We begin with the raw amino-acid sequence, 382 residues long: Mannitol-1-phosphate 5-dehydrogenase (382 aa).

Residue 3–14 (AVHFGAGNIGRG) participates in NAD(+) binding.

This sequence belongs to the mannitol dehydrogenase family.

The catalysed reaction is D-mannitol 1-phosphate + NAD(+) = beta-D-fructose 6-phosphate + NADH + H(+). The polypeptide is Mannitol-1-phosphate 5-dehydrogenase (Aliivibrio salmonicida (strain LFI1238) (Vibrio salmonicida (strain LFI1238))).